We begin with the raw amino-acid sequence, 170 residues long: Myosin regulatory light chain 11 (170 aa).

Alanine 2 bears the N,N,N-trimethylalanine mark. Residues serine 16 and serine 17 each carry the phosphoserine modification. A phosphothreonine mark is found at threonine 26 and threonine 36. The EF-hand 1 domain maps to 26-61 (TQIQEFKEAFTVIDQNRDGIIDKEDLRDTFAAMGRL). Positions 39, 41, 43, and 50 each coordinate Ca(2+). Serine 76 carries the post-translational modification Phosphoserine. EF-hand domains are found at residues 96 to 131 (DPED…QCDR) and 132 to 167 (FSQE…GDAK). Position 102 is a phosphothreonine (threonine 102).

In terms of assembly, myosin is a hexamer of 2 heavy chains and 4 light chains. N,N,N-trimethylalanine found in this myosin light chain would not have been detected in the N-terminal tryptic peptide in PubMed:863872 and PubMed:352892 because it would remain trimethylated and ninhydrin negative after hydrolysis.

Functionally, myosin regulatory subunit that plays an essential role to maintain muscle integrity during early development. Plays a role in muscle contraction. In Oryctolagus cuniculus (Rabbit), this protein is Myosin regulatory light chain 11 (MYL11).